Reading from the N-terminus, the 288-residue chain is Octanoyl-[GcvH]:protein N-octanoyltransferase (288 aa).

The BPL/LPL catalytic domain occupies 44–253; that stretch reads AGGPPTFRLW…VLESAMGPQV (210 aa). Cysteine 148 serves as the catalytic Acyl-thioester intermediate. The segment at 269 to 288 is disordered; it reads GREGASETDPRRVAYGVDRP. Positions 272-288 are enriched in basic and acidic residues; that stretch reads GASETDPRRVAYGVDRP.

This sequence belongs to the octanoyltransferase LipL family.

The enzyme catalyses N(6)-octanoyl-L-lysyl-[glycine-cleavage complex H protein] + L-lysyl-[lipoyl-carrier protein] = N(6)-octanoyl-L-lysyl-[lipoyl-carrier protein] + L-lysyl-[glycine-cleavage complex H protein]. It functions in the pathway protein modification; protein lipoylation via endogenous pathway; protein N(6)-(lipoyl)lysine from octanoyl-[acyl-carrier-protein]. Functionally, catalyzes the amidotransfer (transamidation) of the octanoyl moiety from octanoyl-GcvH to the lipoyl domain of the E2 subunit of lipoate-dependent enzymes. The protein is Octanoyl-[GcvH]:protein N-octanoyltransferase of Kyrpidia tusciae (strain DSM 2912 / NBRC 15312 / T2) (Bacillus tusciae).